Reading from the N-terminus, the 311-residue chain is Malate dehydrogenase (311 aa).

NAD(+) contacts are provided by residues 7-13 (GAAGGIG) and Asp-34. Positions 81 and 87 each coordinate substrate. Residues Asn-94 and 117–119 (ITN) contribute to the NAD(+) site. 2 residues coordinate substrate: Asn-119 and Arg-153. His-177 serves as the catalytic Proton acceptor. Position 227 (Met-227) interacts with NAD(+).

It belongs to the LDH/MDH superfamily. MDH type 1 family. In terms of assembly, homodimer.

It catalyses the reaction (S)-malate + NAD(+) = oxaloacetate + NADH + H(+). Catalyzes the reversible oxidation of malate to oxaloacetate. In Vibrio campbellii (strain ATCC BAA-1116), this protein is Malate dehydrogenase.